The primary structure comprises 336 residues: Carbamoyl dehydratase HypE (336 aa).

Cysteine 336 carries the post-translational modification S-carbamoylcysteine; by HypF; alternate. Cysteine 336 carries the post-translational modification S-cyanocysteine; by autocatalysis; alternate.

This sequence belongs to the HypE family. In terms of assembly, homodimer. Forms a complex with HypF. Also forms a complex with HypC, or HybG, and HypD. In terms of processing, modified by HypF, which adds a carboxamido group to the thiolate of the C-terminal cysteine, yielding a protein-S-carboxamide. The carboxamido group is then dehydrated by HypE itself to yield a protein-thiocyanate.

The enzyme catalyses C-terminal S-carboxamide-L-cysteinyl-[HypE protein] + ATP = C-terminal S-cyanate-L-cysteinyl-[HypE protein] + ADP + phosphate + H(+). The protein operates within protein modification; [NiFe] hydrogenase maturation. Functionally, involved in the maturation of [NiFe] hydrogenases. Along with HypF, it catalyzes the synthesis of the CN ligands of the active site iron of [NiFe]-hydrogenases. HypE catalyzes the ATP-dependent dehydration of the carboxamido group attached to its C-terminal cysteine to a cyano group. The cyano group is then transferred from HypE to the HypC-HypD complex or the HybG-HypD complex. In Escherichia coli (strain K12), this protein is Carbamoyl dehydratase HypE.